The chain runs to 396 residues: MSSKTLAKFLEENLEDLKSKGLYNVIDPLESSNGPIITIGGKEYINLSSNNYLGLATDSRLQEAAIGAIHKYGVGAGAVRTINGTLDLHIKLEETIAKFKHTEAAIAYQSGFNCNMAAISAVMDKNDAILSDELNHASIIDGSRLSKAKIIVYKHSDMEDLRQKAIAAKESGLYNKLMVITDGVFSMDGDVAKLPEIVEIAEELDLMTYVDDAHGSGVLGKGAGTVKHFGLSDKVDFQIGTLSKAIGVIGGYVAGKQNLIDWLKVRSRPFLFSTAVTPADAAACMRSIEILMESTELHDRLWENGRYLKQGLKELGFNIGESETPITPCIIGDEVLTQEFSKRLNEEGVYAKSIVFPTVAKGTGRVRNMPTAAHTKEMLDEAIRKYEKVGKEMGII.

111-112 (GF) lines the pyridoxal 5'-phosphate pocket. Histidine 136 lines the substrate pocket. Residues serine 186, 211–214 (DDAH), and 241–244 (TLSK) contribute to the pyridoxal 5'-phosphate site. Lysine 244 bears the N6-(pyridoxal phosphate)lysine mark. Residue threonine 358 participates in substrate binding.

It belongs to the class-II pyridoxal-phosphate-dependent aminotransferase family. Homodimer. Requires pyridoxal 5'-phosphate as cofactor.

The protein is Putative pyridoxal phosphate-dependent acyltransferase of Bacillus anthracis.